Reading from the N-terminus, the 177-residue chain is Large ribosomal subunit protein uL5 (177 aa).

The protein belongs to the universal ribosomal protein uL5 family. In terms of assembly, part of the 50S ribosomal subunit; contacts the 5S rRNA and probably tRNA. Forms a bridge to the 30S subunit in the 70S ribosome.

Its function is as follows. This is one of the proteins that bind and probably mediate the attachment of the 5S RNA into the large ribosomal subunit, where it forms part of the central protuberance. In the 70S ribosome it contacts protein S13 of the 30S subunit (bridge B1b), connecting the 2 subunits; this bridge is implicated in subunit movement. May contact the P site tRNA; the 5S rRNA and some of its associated proteins might help stabilize positioning of ribosome-bound tRNAs. This chain is Large ribosomal subunit protein uL5, found in Sulfurisphaera tokodaii (strain DSM 16993 / JCM 10545 / NBRC 100140 / 7) (Sulfolobus tokodaii).